The chain runs to 84 residues: Short neurotoxin SNTX-1 (84 aa).

A signal peptide spans 1–21 (MKTLLLILVVVTIVCLDLVCC). 4 disulfides stabilise this stretch: Cys25–Cys46, Cys39–Cys63, Cys65–Cys76, and Cys77–Cys82.

Belongs to the three-finger toxin family. Short-chain subfamily. Type I alpha-neurotoxin sub-subfamily. As to expression, expressed by the venom gland.

The protein resides in the secreted. Binds to muscle nicotinic acetylcholine receptor (nAChR) and inhibit acetylcholine from binding to the receptor, thereby impairing neuromuscular transmission. The chain is Short neurotoxin SNTX-1 from Demansia vestigiata (Lesser black whip snake).